The primary structure comprises 360 residues: METVLVINPGSTSTKLALFANHDCLAEETLRHSVQELAPFENVVSQTSFRKQMIAEFLETHNIIQLAAVVGRGGLLKPIPGGTYLVDQQMLEDLRTERFNTHASNLGAILANEFAEKYHVPAFIVDPVVVDELQPLARISGLKGIQRRSVGHALNQKAVARKIAEDLGKTYEQSNFIVVHLGGGISLGAHQKGRMVDVVNGLDGEGPYTPERSGALPLVEFAQWILEQELTISQVKKLIAGNSGLKSYLGETDLRHIQAQIAAGDQTANYYLKGMCYQIAKSIGEMAVVLEGTIDAIILTGGAAYSQTVVQEISQKVTWIAPIKVYPGEMEMAALYEGVNRVLTGEEQALNYSEAKIEQE.

It belongs to the acetokinase family.

The protein resides in the cytoplasm. It catalyses the reaction butanoate + ATP = butanoyl phosphate + ADP. The polypeptide is Probable butyrate kinase (Enterococcus faecalis (strain ATCC 700802 / V583)).